Reading from the N-terminus, the 80-residue chain is Acyl carrier protein (80 aa).

One can recognise a Carrier domain in the interval 4–79 (EAILEKVRSI…DAVKYIEDKQ (76 aa)). At Ser39 the chain carries O-(pantetheine 4'-phosphoryl)serine.

This sequence belongs to the acyl carrier protein (ACP) family. Post-translationally, 4'-phosphopantetheine is transferred from CoA to a specific serine of apo-ACP by AcpS. This modification is essential for activity because fatty acids are bound in thioester linkage to the sulfhydryl of the prosthetic group.

Its subcellular location is the cytoplasm. Its pathway is lipid metabolism; fatty acid biosynthesis. Functionally, carrier of the growing fatty acid chain in fatty acid biosynthesis. This is Acyl carrier protein from Synechococcus sp. (strain CC9902).